Consider the following 313-residue polypeptide: Fucose-specific lectin (313 aa).

6 repeat units span residues 5 to 57 (FLYT…VIGE), 58 to 109 (AKLF…VGVK), 110 to 162 (VGSN…SFGS), 163 to 208 (TVPG…FSAS), 209 to 260 (ASAG…RPTP), and 261 to 304 (SLPD…IGAV). The 6 X approximate tandem repeats stretch occupies residues 5–304 (FLYTSKIAAI…SGKGWSIGAV (300 aa)). 9 residues coordinate beta-L-fucose: Arg25, Glu37, Arg78, Glu90, Trp98, Gln102, Arg132, Glu147, and Trp154. Residues Arg78 and Glu90 each contribute to the alpha-L-fucose site. Gln102 provides a ligand contact to alpha-L-fucose. Trp154, Arg180, and Glu192 together coordinate alpha-L-fucose. Trp200 provides a ligand contact to beta-L-fucose. Gly204 lines the alpha-L-fucose pocket. Beta-L-fucose contacts are provided by Arg227 and Glu239. Trp246 lines the alpha-L-fucose pocket. Position 299 (Trp299) interacts with beta-L-fucose.

Belongs to the fungal fucose-specific lectin family. As to quaternary structure, forms homodimers. The two AAL monomers are associated via interactions between N-terminal and C-terminal peptides. Tyr-7 interacts via aromatic ring stacking with its counterpart on the other monomer, whereas Ser-284 interacts via hydrogen bonding with Asp-264 on the other monomer.

Its function is as follows. Lectin that specifically binds to L-fucose. Has strongest preference for the alpha-1,6-fucosylated chain (core fucose) on glycoproteins among alpha-1,2-, alpha-1,3-, alpha-1,4-, and alpha-1,6-fucosylated chains. Might play a role in the differentiation of the fruiting body. Exhibits antifungal activity against Mucor racemosus and thus could act as an antifungal protein in natural ecosystems. The chain is Fucose-specific lectin from Aleuria aurantia (Orange peel mushroom).